The following is a 252-amino-acid chain: Imidazole glycerol phosphate synthase subunit HisF (252 aa).

Catalysis depends on residues Asp-11 and Asp-130.

Belongs to the HisA/HisF family. Heterodimer of HisH and HisF.

The protein localises to the cytoplasm. It carries out the reaction 5-[(5-phospho-1-deoxy-D-ribulos-1-ylimino)methylamino]-1-(5-phospho-beta-D-ribosyl)imidazole-4-carboxamide + L-glutamine = D-erythro-1-(imidazol-4-yl)glycerol 3-phosphate + 5-amino-1-(5-phospho-beta-D-ribosyl)imidazole-4-carboxamide + L-glutamate + H(+). The protein operates within amino-acid biosynthesis; L-histidine biosynthesis; L-histidine from 5-phospho-alpha-D-ribose 1-diphosphate: step 5/9. In terms of biological role, IGPS catalyzes the conversion of PRFAR and glutamine to IGP, AICAR and glutamate. The HisF subunit catalyzes the cyclization activity that produces IGP and AICAR from PRFAR using the ammonia provided by the HisH subunit. This is Imidazole glycerol phosphate synthase subunit HisF from Hyphomonas neptunium (strain ATCC 15444).